The primary structure comprises 293 residues: Pyridoxal 5'-phosphate synthase subunit PdxS (293 aa).

Residue aspartate 23 participates in D-ribose 5-phosphate binding. Residue lysine 80 is the Schiff-base intermediate with D-ribose 5-phosphate of the active site. Glycine 152 lines the D-ribose 5-phosphate pocket. D-glyceraldehyde 3-phosphate is bound at residue arginine 164. D-ribose 5-phosphate-binding positions include glycine 213 and 234 to 235 (GS).

Belongs to the PdxS/SNZ family. In terms of assembly, in the presence of PdxT, forms a dodecamer of heterodimers.

The enzyme catalyses aldehydo-D-ribose 5-phosphate + D-glyceraldehyde 3-phosphate + L-glutamine = pyridoxal 5'-phosphate + L-glutamate + phosphate + 3 H2O + H(+). The protein operates within cofactor biosynthesis; pyridoxal 5'-phosphate biosynthesis. In terms of biological role, catalyzes the formation of pyridoxal 5'-phosphate from ribose 5-phosphate (RBP), glyceraldehyde 3-phosphate (G3P) and ammonia. The ammonia is provided by the PdxT subunit. Can also use ribulose 5-phosphate and dihydroxyacetone phosphate as substrates, resulting from enzyme-catalyzed isomerization of RBP and G3P, respectively. This Thermus thermophilus (strain ATCC BAA-163 / DSM 7039 / HB27) protein is Pyridoxal 5'-phosphate synthase subunit PdxS.